A 346-amino-acid polypeptide reads, in one-letter code: High mobility group protein 20A (346 aa).

Composition is skewed to polar residues over residues 1-10 (MESLMASSTL) and 55-65 (SQGQLLQSEAS). 2 disordered regions span residues 1-112 (MESL…YVRF) and 178-210 (FSRK…TEVK). The segment covering 71 to 81 (NEQRPEDEQRS) has biased composition (basic and acidic residues). The segment covering 82 to 95 (KRGGWSKGRKRKKP) has biased composition (basic residues). The HMG box DNA-binding region spans 102-170 (PKSPLTGYVR…RYMKELEQYQ (69 aa)). Ser104 bears the Phosphoserine mark. The segment covering 181-210 (KTQDRQKGKSHRQDAARQATHDHEKETEVK) has biased composition (basic and acidic residues). A coiled-coil region spans residues 228–272 (SKAREAELRQLRKSNMEFEERNAALQKHVESMRTAVEKLEVDVIQ).

As to quaternary structure, interacts with DTNB. In terms of tissue distribution, expressed in brain. Detected in mature neurons.

It is found in the nucleus. Plays a role in neuronal differentiation as chromatin-associated protein. Acts as inhibitor of HMG20B. Overcomes the repressive effects of the neuronal silencer REST and induces the activation of neuronal-specific genes. Involved in the recruitment of the histone methyltransferase KMT2A/MLL1 and consequent increased methylation of histone H3 lysine 4. The protein is High mobility group protein 20A (Hmg20a) of Mus musculus (Mouse).